The primary structure comprises 361 residues: Glyceraldehyde-3-phosphate dehydrogenase, glycosomal (361 aa).

NAD(+) contacts are provided by residues 13 to 14, aspartate 39, glutamine 92, and serine 135; that span reads RI. Residues 166-168, threonine 198, 227-228, and arginine 250 contribute to the D-glyceraldehyde 3-phosphate site; these read SCT and TG. Cysteine 167 functions as the Nucleophile in the catalytic mechanism. Asparagine 336 provides a ligand contact to NAD(+). The Microbody targeting signal motif lies at 359-361; that stretch reads SKM.

It belongs to the glyceraldehyde-3-phosphate dehydrogenase family. In terms of assembly, homotetramer.

The protein localises to the glycosome. It catalyses the reaction D-glyceraldehyde 3-phosphate + phosphate + NAD(+) = (2R)-3-phospho-glyceroyl phosphate + NADH + H(+). It functions in the pathway carbohydrate degradation; glycolysis; pyruvate from D-glyceraldehyde 3-phosphate: step 1/5. The protein is Glyceraldehyde-3-phosphate dehydrogenase, glycosomal (GAPG) of Leishmania mexicana.